We begin with the raw amino-acid sequence, 243 residues long: MNRPPLPLAAHDRLIFALDVPGHDEAIAWVDRLGESVAFYKIGMELLASGEYFHVLDALAKRNKRVFVDLKFFDIPATVAGTIRRLSQWPVSYCTVHGWHAGMLEAAAAANQGDMRLLAVTVLTSMGRPDLAAMGIDREPVDVVVERALAAQAAGIDGVIASGQEAGMIRRATGPAFSIVCPGIRPGGPVGDDQQRTVGVAQAFADGADAIVVGRPIRLANDPAAAAAAIQAEIRAAVVQHRD.

Residues Asp19, Lys41, 69-78 (DLKFFDIPAT), Thr124, Arg185, Gln194, Gly214, and Arg215 each bind substrate. The active-site Proton donor is the Lys71.

It belongs to the OMP decarboxylase family. Type 1 subfamily. Homodimer.

It carries out the reaction orotidine 5'-phosphate + H(+) = UMP + CO2. Its pathway is pyrimidine metabolism; UMP biosynthesis via de novo pathway; UMP from orotate: step 2/2. In terms of biological role, catalyzes the decarboxylation of orotidine 5'-monophosphate (OMP) to uridine 5'-monophosphate (UMP). The chain is Orotidine 5'-phosphate decarboxylase from Xanthomonas campestris pv. campestris (strain 8004).